Here is a 473-residue protein sequence, read N- to C-terminus: ATP synthase subunit beta (473 aa).

153-160 serves as a coordination point for ATP; sequence GGAGVGKT.

The protein belongs to the ATPase alpha/beta chains family. As to quaternary structure, F-type ATPases have 2 components, CF(1) - the catalytic core - and CF(0) - the membrane proton channel. CF(1) has five subunits: alpha(3), beta(3), gamma(1), delta(1), epsilon(1). CF(0) has three main subunits: a(1), b(2) and c(9-12). The alpha and beta chains form an alternating ring which encloses part of the gamma chain. CF(1) is attached to CF(0) by a central stalk formed by the gamma and epsilon chains, while a peripheral stalk is formed by the delta and b chains.

It localises to the cell inner membrane. The enzyme catalyses ATP + H2O + 4 H(+)(in) = ADP + phosphate + 5 H(+)(out). Its function is as follows. Produces ATP from ADP in the presence of a proton gradient across the membrane. The catalytic sites are hosted primarily by the beta subunits. The sequence is that of ATP synthase subunit beta from Rickettsia canadensis (strain McKiel).